A 309-amino-acid chain; its full sequence is Ribonuclease Z (309 aa).

Zn(2+) is bound by residues histidine 63, histidine 65, aspartate 67, histidine 68, histidine 145, aspartate 216, and histidine 274. The active-site Proton acceptor is the aspartate 67.

Belongs to the RNase Z family. As to quaternary structure, homodimer. Zn(2+) is required as a cofactor.

It carries out the reaction Endonucleolytic cleavage of RNA, removing extra 3' nucleotides from tRNA precursor, generating 3' termini of tRNAs. A 3'-hydroxy group is left at the tRNA terminus and a 5'-phosphoryl group is left at the trailer molecule.. In terms of biological role, zinc phosphodiesterase, which displays some tRNA 3'-processing endonuclease activity. Probably involved in tRNA maturation, by removing a 3'-trailer from precursor tRNA. This chain is Ribonuclease Z, found in Streptococcus pyogenes serotype M6 (strain ATCC BAA-946 / MGAS10394).